Reading from the N-terminus, the 116-residue chain is Nitrogenase iron-iron protein delta chain (116 aa).

In terms of assembly, hexamer of two alpha, two beta, and two delta chains. The cofactor is iron-sulfur cluster.

The catalysed reaction is N2 + 8 reduced [2Fe-2S]-[ferredoxin] + 16 ATP + 16 H2O = H2 + 8 oxidized [2Fe-2S]-[ferredoxin] + 2 NH4(+) + 16 ADP + 16 phosphate + 6 H(+). In terms of biological role, the key enzymatic reactions in nitrogen fixation are catalyzed by the nitrogenase complex, which has 2 components: the iron protein (component 2) and a component 1 which is either a molybdenum-iron protein, a vanadium-iron, or an iron-iron protein. In Clostridium pasteurianum, this protein is Nitrogenase iron-iron protein delta chain (anfG).